A 458-amino-acid chain; its full sequence is Ribulose bisphosphate carboxylase (458 aa).

Residue Asn111 coordinates substrate. Lys166 serves as the catalytic Proton acceptor. Residue Lys168 coordinates substrate. Mg(2+) contacts are provided by Lys191, Asp193, and Glu194. Lys191 bears the N6-carboxylysine mark. The active-site Proton acceptor is the His287. Arg288, His321, and Ser368 together coordinate substrate.

The protein belongs to the RuBisCO large chain family. Type II subfamily. In terms of assembly, homodimer. Requires Mg(2+) as cofactor.

It catalyses the reaction 2 (2R)-3-phosphoglycerate + 2 H(+) = D-ribulose 1,5-bisphosphate + CO2 + H2O. It carries out the reaction D-ribulose 1,5-bisphosphate + O2 = 2-phosphoglycolate + (2R)-3-phosphoglycerate + 2 H(+). RuBisCO catalyzes two reactions: the carboxylation of D-ribulose 1,5-bisphosphate, the primary event in carbon dioxide fixation, as well as the oxidative fragmentation of the pentose substrate. Both reactions occur simultaneously and in competition at the same active site. The protein is Ribulose bisphosphate carboxylase (cbbM) of Rhodobacter capsulatus (Rhodopseudomonas capsulata).